The following is a 413-amino-acid chain: Amino acid transporter AVT3B (413 aa).

Topologically, residues 1 to 27 are cytoplasmic; the sequence is MGLEEQGRAREDTPLLGKGRPLSSKFK. A helical transmembrane segment spans residues 28–48; sequence TFANVFIAIVGAGVLGLPYAF. Topologically, residues 49 to 54 are vacuolar; sequence KRTGWL. A helical transmembrane segment spans residues 55 to 75; the sequence is MGLLTLFSVAALINHCMMLLV. Residues 76-103 lie on the Cytoplasmic side of the membrane; sequence HIRRKLGVSNIGSFGDLGFAACGNLGRF. Residues 104 to 124 form a helical membrane-spanning segment; sequence VVDILIILSQAGFCVGYLIFI. Residues 125-145 are Vacuolar-facing; sequence GNTLANLSKPTKSTTLMSLRH. Residues 146–166 traverse the membrane as a helical segment; that stretch reads LMGVSPKSLYIWGCFPFQLGL. At 167–174 the chain is on the cytoplasmic side; sequence NSIKTLTH. The helical transmembrane segment at 175–195 threads the bilayer; the sequence is LAPLSIFADVVDLGAMAVVIV. Residues 196 to 207 are Vacuolar-facing; that stretch reads EDIKITVVQRPQ. Residues 208–228 form a helical membrane-spanning segment; that stretch reads VVAFGGMSVFFYGMGVAVYAF. The Cytoplasmic portion of the chain corresponds to 229-249; sequence EGVGMVLPLESETKDKDKFGK. A helical transmembrane segment spans residues 250–270; sequence VLALSMLFIAVMYGSFGVLGY. Residues 271–288 lie on the Vacuolar side of the membrane; sequence MAFGDDTMDIITANLGAG. A helical transmembrane segment spans residues 289-309; sequence VVSSLVQLGLCINLFFTFPLM. Over 310–331 the chain is Cytoplasmic; that stretch reads MNPVFEIVERRFWSGMYCVWLR. Residues 332 to 352 form a helical membrane-spanning segment; that stretch reads WLLVLAVTLVALLVPNFADFL. Residues 353–355 lie on the Vacuolar side of the membrane; that stretch reads SLV. Residues 356 to 376 form a helical membrane-spanning segment; sequence GSSVCCALGFVLPSLFHLMVF. Topologically, residues 377–390 are cytoplasmic; that stretch reads KDEMEWKQRALDVG. The chain crosses the membrane as a helical span at residues 391 to 411; sequence ILLLGVILGVSGTWSSLTEIF. Topologically, residues 412–413 are vacuolar; the sequence is QE.

The protein belongs to the amino acid/polyamine transporter 2 family. Amino acid/auxin permease (AAAP) (TC 2.A.18.8) subfamily. In terms of tissue distribution, ubiquitous.

The protein localises to the vacuole membrane. In terms of biological role, translocates preferentially neutral amino acids from the vacuole to the cytoplasm. This chain is Amino acid transporter AVT3B, found in Arabidopsis thaliana (Mouse-ear cress).